Reading from the N-terminus, the 668-residue chain is Calpain-13 (668 aa).

In terms of domain architecture, Calpain catalytic spans Leu34–Phe331. Active-site residues include Cys93, His249, and Asn273. EF-hand domains follow at residues Phe537–Cys572 and Ile635–Ser668.

It belongs to the peptidase C2 family.

Probable non-lysosomal thiol-protease. The protein is Calpain-13 (Capn13) of Rattus norvegicus (Rat).